A 1283-amino-acid polypeptide reads, in one-letter code: Bifunctional dioxygenase (DOX)-epoxy alcohol synthase (EAS) (1283 aa).

Residues 1 to 64 (MAEHKNGVAT…LPKEMGDGSY (64 aa)) form a disordered region. Residues 130 to 476 (TNSFISQLWN…DGKFNDDELV (347 aa)) are fatty acid alpha-dioxygenase. Residue His-227 participates in heme b binding. Tyr-405 is a catalytic residue. Heme b is bound at residue His-408. The epoxy alcohol synthase stretch occupies residues 684–1108 (INIIGYNAAK…WDDGCGTDLF (425 aa)). A heme-binding site is contributed by Cys-1035.

In the N-terminal section; belongs to the peroxidase family. The protein in the C-terminal section; belongs to the cytochrome P450 family. In terms of assembly, homotetramer. It depends on heme b as a cofactor. Requires heme as cofactor.

The enzyme catalyses (9Z,12Z)-octadecadienoate + O2 = (8E,10R,12Z)-10-hydroperoxyoctadeca-8,12-dienoate. It catalyses the reaction (8E,10R,12Z)-10-hydroperoxyoctadeca-8,12-dienoate = (12S,13R)-epoxy-(10R)-hydroxy-(8E)-octadecenoate. The catalysed reaction is (9Z)-octadecenoate + O2 = (8R)-hydroperoxy-(9Z)-octadecenoate. Functionally, bifunctional dioxygenase (DOX)-epoxy alcohol synthase (EAS) that converts linoleic acid (18:2n-6) sequentially to 10(R)-hydroperoxy-8(E),12(Z)-octadecadienoic acid (10R-HPODE) and 10R-HPODE further to 12(13)-epoxy-10-hydroxy-8(E)-octa-decenoic acid as the end product. Linoleic acid is oxidized mainly to the R stereoisomer of 10-HPODE. The dioxygenase domain is also able to oygenate position C-8 of linoleic acid to produce 8(R)-hydroperoxy-8(E),12(Z)-octadecadienoic acid (8R-HPODE). The protein is Bifunctional dioxygenase (DOX)-epoxy alcohol synthase (EAS) of Fusarium oxysporum (strain Fo5176) (Fusarium vascular wilt).